The sequence spans 187 residues: MKIMGILGIQGDIEEHEDAVRKINCIPKRIRTVDDLEGIDALIIPGGESTTIGKLMVSYGFIDKIRNLKIPILGTCAGMVLLSKGTGKEQPLLDILNVTIKRNAYGSQKDSFEKEIVLGGKEIHAVFIRAPQVGDILSKDVEIISKDDENIVGVKQGNIMAISFHPELSDDGVIAYEYFLKNFVEKN.

47 to 49 (GES) serves as a coordination point for L-glutamine. C76 (nucleophile) is an active-site residue. L-glutamine is bound by residues R102 and 128–129 (IR). Active-site charge relay system residues include H165 and E167.

It belongs to the glutaminase PdxT/SNO family. In the presence of PdxS, forms a dodecamer of heterodimers. Only shows activity in the heterodimer.

It catalyses the reaction aldehydo-D-ribose 5-phosphate + D-glyceraldehyde 3-phosphate + L-glutamine = pyridoxal 5'-phosphate + L-glutamate + phosphate + 3 H2O + H(+). The enzyme catalyses L-glutamine + H2O = L-glutamate + NH4(+). It participates in cofactor biosynthesis; pyridoxal 5'-phosphate biosynthesis. Its function is as follows. Catalyzes the hydrolysis of glutamine to glutamate and ammonia as part of the biosynthesis of pyridoxal 5'-phosphate. The resulting ammonia molecule is channeled to the active site of PdxS. This chain is Pyridoxal 5'-phosphate synthase subunit PdxT, found in Methanococcus maripaludis (strain C5 / ATCC BAA-1333).